A 407-amino-acid polypeptide reads, in one-letter code: Extracellular superoxide dismutase [Cu-Zn] 3 (407 aa).

A signal peptide spans 1–19; the sequence is MRLLSVLVFLISVISIAKA. At 20 to 386 the chain is on the extracellular side; that stretch reads DYQYAFCKFN…SESYNDNEPG (367 aa). N-linked (GlcNAc...) asparagine glycosylation is found at Asn51, Asn205, and Asn224. The Cu cation site is built by His245 and His247. Asn256 carries an N-linked (GlcNAc...) asparagine glycan. Position 263 (His263) interacts with Cu cation. Positions 263, 271, 280, and 283 each coordinate Zn(2+). His320 contributes to the Cu cation binding site. Asn321 and Asn364 each carry an N-linked (GlcNAc...) asparagine glycan. A helical membrane pass occupies residues 387 to 406; sequence SSSTVIPFFALIIFSIIFAL. A topological domain (cytoplasmic) is located at residue Leu407.

Belongs to the Cu-Zn superoxide dismutase family. Requires Cu cation as cofactor. It depends on Zn(2+) as a cofactor.

It is found in the cell membrane. It carries out the reaction 2 superoxide + 2 H(+) = H2O2 + O2. Functionally, protect the extracellular space from toxic effect of reactive oxygen intermediates by converting superoxyde radicals into hydrogen peroxyde and oxygen. The chain is Extracellular superoxide dismutase [Cu-Zn] 3 (sodC) from Dictyostelium discoideum (Social amoeba).